We begin with the raw amino-acid sequence, 257 residues long: MAEAPAKKLTVSATEVAVEIVNMNKWYGDFHVLRDINLKVMRGERIVIAGPSGSGKSTMIRCINRLEEHQKGKIVVDGTELTNDLKKIDEVRREVGMVFQHFNLFPHLTILENCTLAPIWVRKMPKKQAEEVAMHFLKRVKIPEQANKYPGQLSGGQQQRVAIARSLCMNPKIMLFDEPTSALDPEMIKEVLDTMVGLAEEGMTMLCVTHEMGFARQVANRVIFMDQGQIVEQNEPAAFFDNPQHERTKLFLSQILH.

Residues 18–252 (VEIVNMNKWY…PQHERTKLFL (235 aa)) enclose the ABC transporter domain. 50–57 (GPSGSGKS) contacts ATP.

This sequence belongs to the ABC transporter superfamily.

Functionally, part of a binding-protein-dependent transport system for L-amino acids, affects the uptake as well as the efflux of these amino acids. Probably responsible for energy coupling to the transport system. In Rhizobium johnstonii (strain DSM 114642 / LMG 32736 / 3841) (Rhizobium leguminosarum bv. viciae), this protein is General L-amino acid transport ATP-binding protein AapP (aapP).